A 71-amino-acid polypeptide reads, in one-letter code: Beta-defensin 131A (71 aa).

An N-terminal signal peptide occupies residues 1–22 (MRVLFFVFGVLSLMFTVPPARS). 3 cysteine pairs are disulfide-bonded: C29–C57, C37–C51, and C41–C58.

It belongs to the beta-defensin family.

It localises to the secreted. Has antibacterial activity. Upon stimulation with lipoteichoic acid, promotes cytokines and chemokines production and secretion. The polypeptide is Beta-defensin 131A (Pan troglodytes (Chimpanzee)).